The sequence spans 108 residues: UPF0060 membrane protein YnfA (108 aa).

At 1–5 (MFKTT) the chain is on the periplasmic side. Residues 6–26 (LLFFITALCEIIGCFLPWLWL) traverse the membrane as a helical segment. The Cytoplasmic segment spans residues 27–30 (KRNG). Residues 31 to 51 (SIWLLLPAGVSLAFFVWLLTL) form a helical membrane-spanning segment. The Periplasmic segment spans residues 52 to 60 (HPAASGRVY). Residues 61-81 (AAYGGVYVCTALLWLRFIDGV) traverse the membrane as a helical segment. The Cytoplasmic segment spans residues 82 to 84 (KLS). A helical membrane pass occupies residues 85–105 (LYDWSGALIALCGMLIIVAGW). At 106 to 108 (GRA) the chain is on the periplasmic side.

The protein belongs to the UPF0060 family.

The protein resides in the cell inner membrane. This is UPF0060 membrane protein YnfA from Escherichia fergusonii (strain ATCC 35469 / DSM 13698 / CCUG 18766 / IAM 14443 / JCM 21226 / LMG 7866 / NBRC 102419 / NCTC 12128 / CDC 0568-73).